The primary structure comprises 298 residues: GTP cyclohydrolase FolE2 (298 aa).

It belongs to the GTP cyclohydrolase IV family.

The catalysed reaction is GTP + H2O = 7,8-dihydroneopterin 3'-triphosphate + formate + H(+). It participates in cofactor biosynthesis; 7,8-dihydroneopterin triphosphate biosynthesis; 7,8-dihydroneopterin triphosphate from GTP: step 1/1. In terms of biological role, converts GTP to 7,8-dihydroneopterin triphosphate. This is GTP cyclohydrolase FolE2 from Neisseria meningitidis serogroup C (strain 053442).